Consider the following 641-residue polypeptide: 1-deoxy-D-xylulose-5-phosphate synthase (641 aa).

Thiamine diphosphate contacts are provided by residues His-80 and 121–123 (GHS). Asp-152 is a binding site for Mg(2+). Thiamine diphosphate contacts are provided by residues 153–154 (GS), Asn-181, Tyr-290, and Glu-372. Asn-181 contacts Mg(2+).

This sequence belongs to the transketolase family. DXPS subfamily. As to quaternary structure, homodimer. The cofactor is Mg(2+). Thiamine diphosphate is required as a cofactor.

It catalyses the reaction D-glyceraldehyde 3-phosphate + pyruvate + H(+) = 1-deoxy-D-xylulose 5-phosphate + CO2. Its pathway is metabolic intermediate biosynthesis; 1-deoxy-D-xylulose 5-phosphate biosynthesis; 1-deoxy-D-xylulose 5-phosphate from D-glyceraldehyde 3-phosphate and pyruvate: step 1/1. Functionally, catalyzes the acyloin condensation reaction between C atoms 2 and 3 of pyruvate and glyceraldehyde 3-phosphate to yield 1-deoxy-D-xylulose-5-phosphate (DXP). This chain is 1-deoxy-D-xylulose-5-phosphate synthase, found in Rhodobacter capsulatus (Rhodopseudomonas capsulata).